Reading from the N-terminus, the 957-residue chain is Glycine dehydrogenase (decarboxylating) 2 (957 aa).

Lys-707 is modified (N6-(pyridoxal phosphate)lysine).

Belongs to the GcvP family. The glycine cleavage system is composed of four proteins: P, T, L and H. Pyridoxal 5'-phosphate serves as cofactor.

The enzyme catalyses N(6)-[(R)-lipoyl]-L-lysyl-[glycine-cleavage complex H protein] + glycine + H(+) = N(6)-[(R)-S(8)-aminomethyldihydrolipoyl]-L-lysyl-[glycine-cleavage complex H protein] + CO2. In terms of biological role, the glycine cleavage system catalyzes the degradation of glycine. The P protein binds the alpha-amino group of glycine through its pyridoxal phosphate cofactor; CO(2) is released and the remaining methylamine moiety is then transferred to the lipoamide cofactor of the H protein. The polypeptide is Glycine dehydrogenase (decarboxylating) 2 (Pseudomonas fluorescens (strain Pf0-1)).